The following is an 854-amino-acid chain: Transcription factor asR3 (854 aa).

The segment at residues 19 to 45 is a DNA-binding region (zn(2)-C6 fungal-type); that stretch reads CWECRRRKIKCDRNDPCAHCIRHETQC. The interval 56-156 is disordered; it reads TDSDVSRTRP…SLSTNTSPSA (101 aa). Composition is skewed to polar residues over residues 78–90 and 125–145; these read ASGSNSAVATRPS and LNPSQDVSAPSTQVLQPSSRG. Over residues 146 to 156 the composition is skewed to low complexity; that stretch reads PSLSTNTSPSA.

The protein resides in the nucleus. Functionally, transcription factor; part of the gene cluster that mediates the biosynthesis of xenovulene A, an unusual meroterpenoid that has potent inhibitory effects on the human gamma-aminobutyrate A (GABAA) benzodiazepine receptor. This chain is Transcription factor asR3, found in Sarocladium schorii (Acremonium strictum (strain IMI 501407)).